The sequence spans 1486 residues: Chromosome partition protein MukB (1486 aa).

34-41 (GGNGAGKS) contributes to the ATP binding site. Coiled-coil stretches lie at residues 326 to 418 (LEAD…QYNQ), 444 to 480 (LETF…QAYQ), and 509 to 603 (RHLA…RAPV). The interval 666-783 (PGGSEDQRLN…EVPLFGRAAR (118 aa)) is flexible hinge. Coiled-coil stretches lie at residues 835–923 (EAEI…AKLE), 977–1115 (EMLS…TAKA), and 1209–1266 (VEAI…QNVS).

Belongs to the SMC family. MukB subfamily. Homodimerization via its hinge domain. Binds to DNA via its C-terminal region. Interacts, and probably forms a ternary complex, with MukE and MukF via its C-terminal region. The complex formation is stimulated by calcium or magnesium. Interacts with tubulin-related protein FtsZ.

It localises to the cytoplasm. The protein resides in the nucleoid. In terms of biological role, plays a central role in chromosome condensation, segregation and cell cycle progression. Functions as a homodimer, which is essential for chromosome partition. Involved in negative DNA supercoiling in vivo, and by this means organize and compact chromosomes. May achieve or facilitate chromosome segregation by condensation DNA from both sides of a centrally located replisome during cell division. The chain is Chromosome partition protein MukB from Escherichia coli O17:K52:H18 (strain UMN026 / ExPEC).